A 201-amino-acid polypeptide reads, in one-letter code: Glutathione peroxidase 1 (201 aa).

A Phosphoserine modification is found at Ser-32. Residue Sec-47 is part of the active site. Position 47 (Sec-47) is a non-standard amino acid, selenocysteine. An N6-acetyllysine; alternate mark is found at Lys-86, Lys-112, and Lys-146. N6-succinyllysine; alternate is present on residues Lys-86, Lys-112, and Lys-146. Ser-195 and Ser-199 each carry phosphoserine.

Belongs to the glutathione peroxidase family. In terms of assembly, homotetramer. Interacts with MIEN1. In terms of processing, during periods of oxidative stress, Sec-47 may react with a superoxide radical, irreversibly lose hydroselenide and be converted to dehydroalanine.

The protein localises to the cytoplasm. It is found in the mitochondrion. It catalyses the reaction 2 glutathione + H2O2 = glutathione disulfide + 2 H2O. It carries out the reaction a hydroperoxy polyunsaturated fatty acid + 2 glutathione = a hydroxy polyunsaturated fatty acid + glutathione disulfide + H2O. The enzyme catalyses tert-butyl hydroperoxide + 2 glutathione = tert-butanol + glutathione disulfide + H2O. The catalysed reaction is cumene hydroperoxide + 2 glutathione = 2-phenylpropan-2-ol + glutathione disulfide + H2O. It catalyses the reaction (13S)-hydroperoxy-(9Z,11E)-octadecadienoate + 2 glutathione = (13S)-hydroxy-(9Z,11E)-octadecadienoate + glutathione disulfide + H2O. It carries out the reaction (9S)-hydroperoxy-(10E,12Z)-octadecadienoate + 2 glutathione = (9S)-hydroxy-(10E,12Z)-octadecadienoate + glutathione disulfide + H2O. The enzyme catalyses (5S)-hydroperoxy-(6E,8Z,11Z,14Z)-eicosatetraenoate + 2 glutathione = (5S)-hydroxy-(6E,8Z,11Z,14Z)-eicosatetraenoate + glutathione disulfide + H2O. The catalysed reaction is (12S)-hydroperoxy-(5Z,8Z,10E,14Z)-eicosatetraenoate + 2 glutathione = (12S)-hydroxy-(5Z,8Z,10E,14Z)-eicosatetraenoate + glutathione disulfide + H2O. It catalyses the reaction (12R)-hydroperoxy-(5Z,8Z,10E,14Z)-eicosatetraenoate + 2 glutathione = (12R)-hydroxy-(5Z,8Z,10E,14Z)-eicosatetraenoate + glutathione disulfide + H2O. It carries out the reaction (15S)-hydroperoxy-(5Z,8Z,11Z,13E)-eicosatetraenoate + 2 glutathione = (15S)-hydroxy-(5Z,8Z,11Z,13E)-eicosatetraenoate + glutathione disulfide + H2O. The enzyme catalyses (5S)-hydroperoxy-(6E,8Z,11Z,14Z,17Z)-eicosapentaenoate + 2 glutathione = (5S)-hydroxy-(6E,8Z,11Z,14Z,17Z)-eicosapentaenoate + glutathione disulfide + H2O. The catalysed reaction is (12S)-hydroperoxy-(5Z,8Z,10E,14Z,17Z)-eicosapentaenoate + 2 glutathione = (12S)-hydroxy-(5Z,8Z,10E,14Z,17Z)-eicosapentaenoate + glutathione disulfide + H2O. It catalyses the reaction (15S)-hydroperoxy-(5Z,8Z,11Z,13E,17Z)-eicosapentaenoate + 2 glutathione = (15S)-hydroxy-(5Z,8Z,11Z,13E,17Z)-eicosapentaenoate + glutathione disulfide + H2O. It carries out the reaction (15S)-hydroperoxy-(11Z,13E)-eicosadienoate + 2 glutathione = (15S)-hydroxy-(11Z,13E)-eicosadienoate + glutathione disulfide + H2O. The enzyme catalyses (17S)-hydroperoxy-(4Z,7Z,10Z,13Z,15E,19Z)-docosahexaenoate + 2 glutathione = (17S)-hydroxy-(4Z,7Z,10Z,13Z,15E,19Z)-docosahexaenoate + glutathione disulfide + H2O. Its function is as follows. Catalyzes the reduction of hydroperoxides in a glutathione-dependent manner thus regulating cellular redox homeostasis. Can reduce small soluble hydroperoxides such as H2O2, cumene hydroperoxide and tert-butyl hydroperoxide, as well as several fatty acid-derived hydroperoxides. In platelets catalyzes the reduction of 12-hydroperoxyeicosatetraenoic acid, the primary product of the arachidonate 12-lipoxygenase pathway. This is Glutathione peroxidase 1 (GPX1) from Callithrix jacchus (White-tufted-ear marmoset).